The primary structure comprises 705 residues: UvrABC system protein C (705 aa).

Residues 16 to 95 (ETPGVYRFRD…IKQFDPRFNV (80 aa)) enclose the GIY-YIG domain. Residues 208–243 (GRYLRRLEREMQQAAQAQEYERAARLRDDIGALRRA) form the UVR domain. Low complexity predominate over residues 315-332 (AASTGTAGSTVPTTTAGS). Disordered stretches follow at residues 315-335 (AASTGTAGSTVPTTTAGSQGE) and 683-705 (RADAPAPVVDPRTGEILDTETVS).

This sequence belongs to the UvrC family. In terms of assembly, interacts with UvrB in an incision complex.

Its subcellular location is the cytoplasm. The UvrABC repair system catalyzes the recognition and processing of DNA lesions. UvrC both incises the 5' and 3' sides of the lesion. The N-terminal half is responsible for the 3' incision and the C-terminal half is responsible for the 5' incision. The sequence is that of UvrABC system protein C from Frankia casuarinae (strain DSM 45818 / CECT 9043 / HFP020203 / CcI3).